The sequence spans 248 residues: Ribonuclease PH (248 aa).

Phosphate is bound by residues Arg86 and Gly124 to Arg126.

The protein belongs to the RNase PH family. As to quaternary structure, homohexameric ring arranged as a trimer of dimers.

The catalysed reaction is tRNA(n+1) + phosphate = tRNA(n) + a ribonucleoside 5'-diphosphate. Functionally, phosphorolytic 3'-5' exoribonuclease that plays an important role in tRNA 3'-end maturation. Removes nucleotide residues following the 3'-CCA terminus of tRNAs; can also add nucleotides to the ends of RNA molecules by using nucleoside diphosphates as substrates, but this may not be physiologically important. Probably plays a role in initiation of 16S rRNA degradation (leading to ribosome degradation) during starvation. In Listeria monocytogenes serotype 4b (strain CLIP80459), this protein is Ribonuclease PH.